The following is a 166-amino-acid chain: Small ribosomal subunit protein uS4 (166 aa).

The region spanning 102 to 164 (RRLQTIVWRK…HPSCLEVEKE (63 aa)) is the S4 RNA-binding domain.

This sequence belongs to the universal ribosomal protein uS4 family. Part of the 30S ribosomal subunit. Contacts protein S5. The interaction surface between S4 and S5 is involved in control of translational fidelity.

Functionally, one of the primary rRNA binding proteins, it binds directly to 16S rRNA where it nucleates assembly of the body of the 30S subunit. With S5 and S12 plays an important role in translational accuracy. The protein is Small ribosomal subunit protein uS4 of Korarchaeum cryptofilum (strain OPF8).